Here is a 167-residue protein sequence, read N- to C-terminus: MTTRSLSTFLTSFLLVSLDWVSKLVVLLKSCQLSPHSPALLYSYVWGHFSFLIVPSFNEGAAFGLFAQYKIPLLIFRVFVILCLFLFLGIKFRSLHIRTRIALTLILAGALGNVGDILFHGKVVDFLSINYYSWSFPSFNLADAFISLGTLLLVGHLYFSKEDKKYF.

The next 4 membrane-spanning stretches (helical) occupy residues 8 to 28, 46 to 66, 70 to 90, and 101 to 121; these read TFLTSFLLVSLDWVSKLVVLL, WGHFSFLIVPSFNEGAAFGLF, KIPLLIFRVFVILCLFLFLGI, and IALTLILAGALGNVGDILFHG. Active-site residues include D125 and D143. The helical transmembrane segment at 139-159 threads the bilayer; the sequence is FNLADAFISLGTLLLVGHLYF.

This sequence belongs to the peptidase A8 family.

It is found in the cell inner membrane. The enzyme catalyses Release of signal peptides from bacterial membrane prolipoproteins. Hydrolyzes -Xaa-Yaa-Zaa-|-(S,diacylglyceryl)Cys-, in which Xaa is hydrophobic (preferably Leu), and Yaa (Ala or Ser) and Zaa (Gly or Ala) have small, neutral side chains.. It participates in protein modification; lipoprotein biosynthesis (signal peptide cleavage). Functionally, this protein specifically catalyzes the removal of signal peptides from prolipoproteins. The protein is Lipoprotein signal peptidase of Chlamydia muridarum (strain MoPn / Nigg).